Here is a 493-residue protein sequence, read N- to C-terminus: MANYFNSLNLRQQLAQLSQCRFMDRSEFENGCDYIKGWNIVILGCGAQGLNQGLNMRDSGLNISYALRAEAIAEKRASWKKATDNGFTVGTFEELIPQADLVLNLTPDKQHSNVVNTVMPLMKQGATLSYSHGFNIVEEGMQVRPDITVIMVAPKCPGTEVREEYKRGFGVPTLIAVHPENDPRGDGLEIAKAYASATGGDRAGVLHSSFIAEVKSDLMGEQTILCGMLQTSAILGYEKMVADGVEPGYAAKLIQQGLETITEALKQGGITNMMDRLSNPAKIKAFDMAEELKGILAPLFEKHMDDIISGEFSRTMMADWANDDANLLRWRAETNETAFENAPSSNEHIDEQTYFDKGIFLVAMIKAGVELAFDTMVDAGIIEESAYYESLHETPLIANTIARKRLYEMNVVISDTAEYGCYLFNHAAVPLLRDYVKSMSAEYLGGGLKDSSNAVDNVRLIEVNQAIRNTAVEFIGEELRGYMKDMKRISAAQ.

The region spanning 17–208 is the KARI N-terminal Rossmann domain; sequence LSQCRFMDRS…GGDRAGVLHS (192 aa). NADP(+)-binding positions include 45-48, Arg68, Arg76, Ser78, and 108-110; these read CGAQ and DKQ. Residue His132 is part of the active site. Position 158 (Gly158) interacts with NADP(+). 2 consecutive KARI C-terminal knotted domains span residues 209–344 and 345–486; these read SFIA…NAPS and SNEH…MKDM. Positions 217, 221, 389, and 393 each coordinate Mg(2+). Residue Ser414 coordinates substrate.

This sequence belongs to the ketol-acid reductoisomerase family. Mg(2+) is required as a cofactor.

The enzyme catalyses (2R)-2,3-dihydroxy-3-methylbutanoate + NADP(+) = (2S)-2-acetolactate + NADPH + H(+). The catalysed reaction is (2R,3R)-2,3-dihydroxy-3-methylpentanoate + NADP(+) = (S)-2-ethyl-2-hydroxy-3-oxobutanoate + NADPH + H(+). It participates in amino-acid biosynthesis; L-isoleucine biosynthesis; L-isoleucine from 2-oxobutanoate: step 2/4. Its pathway is amino-acid biosynthesis; L-valine biosynthesis; L-valine from pyruvate: step 2/4. Involved in the biosynthesis of branched-chain amino acids (BCAA). Catalyzes an alkyl-migration followed by a ketol-acid reduction of (S)-2-acetolactate (S2AL) to yield (R)-2,3-dihydroxy-isovalerate. In the isomerase reaction, S2AL is rearranged via a Mg-dependent methyl migration to produce 3-hydroxy-3-methyl-2-ketobutyrate (HMKB). In the reductase reaction, this 2-ketoacid undergoes a metal-dependent reduction by NADPH to yield (R)-2,3-dihydroxy-isovalerate. The chain is Ketol-acid reductoisomerase (NADP(+)) from Shewanella amazonensis (strain ATCC BAA-1098 / SB2B).